Reading from the N-terminus, the 103-residue chain is Putative membrane protein insertion efficiency factor (103 aa).

The protein belongs to the UPF0161 family.

It is found in the cell inner membrane. Could be involved in insertion of integral membrane proteins into the membrane. This chain is Putative membrane protein insertion efficiency factor, found in Chlamydia abortus (strain DSM 27085 / S26/3) (Chlamydophila abortus).